A 147-amino-acid polypeptide reads, in one-letter code: MHGMGYDSRLDRLAATSWYPFFNNVTARGEIMEPYSLTLDEACDFLKISRPTAINWIRTGRLQATRKDPTKSKSPYLTTRQACIAALQSPLHTVQVSAGDGITEERKCHSSAEVKYGTPVSHCRTVKDLNSLLEQRTKGRRQNSMTS.

Functionally, excisionase and integrase are necessary for the excision of prophage from the host genome by site-specific recombination. The protein is Excisionase (xis) of Shigella phage SfV (Shigella flexneri bacteriophage V).